Consider the following 320-residue polypeptide: MSKPEDLGDANGDADRGDLSGDLRSVLVTSVLNLEPLDEDLYRGRHYWVPTSQRLFGGQIVGQALVAAAKSVSEDVHVHSLHCYFVRAGDPKVPVLYHVERTRTGASFSVRAVKAVQHGKAIFICQASFQQMQPSPLQHQFSMPTVPPPEELLDHEALIDQYLRDPNLHEKYRVGLNRIAAREVPIEIKLVNPPALNQLQTLEPKQMFWVRARGYIGEGDIKMHCCVAAYISDYAFLGTALLPHQSKYKVNFMVSLDHSMWFHAPFRADHWMLYECESPWAGGSRGLVHGRLWRRDGVLAVTCAQEGVIRSKPRVSESKL.

Active-site charge relay system residues include Asp233, Ser255, and Gln305. The short motif at 318-320 (SKL) is the Microbody targeting signal element.

Belongs to the C/M/P thioester hydrolase family. In terms of assembly, homodimer.

Its subcellular location is the peroxisome matrix. It carries out the reaction choloyl-CoA + H2O = cholate + CoA + H(+). The catalysed reaction is chenodeoxycholoyl-CoA + H2O = chenodeoxycholate + CoA + H(+). The enzyme catalyses acetyl-CoA + H2O = acetate + CoA + H(+). It catalyses the reaction butanoyl-CoA + H2O = butanoate + CoA + H(+). It carries out the reaction hexanoyl-CoA + H2O = hexanoate + CoA + H(+). The catalysed reaction is octanoyl-CoA + H2O = octanoate + CoA + H(+). The enzyme catalyses decanoyl-CoA + H2O = decanoate + CoA + H(+). It catalyses the reaction dodecanoyl-CoA + H2O = dodecanoate + CoA + H(+). It carries out the reaction tetradecanoyl-CoA + H2O = tetradecanoate + CoA + H(+). The catalysed reaction is 4,8-dimethylnonanoyl-CoA + H2O = 4,8-dimethylnonanoate + CoA + H(+). The enzyme catalyses 2,6-dimethylheptanoyl-CoA + H2O = 2,6-dimethylheptanoate + CoA + H(+). It catalyses the reaction malonyl-CoA + H2O = malonate + CoA + H(+). It carries out the reaction acetoacetyl-CoA + H2O = acetoacetate + CoA + H(+). The catalysed reaction is propanoyl-CoA + H2O = propanoate + CoA + H(+). The enzyme catalyses succinyl-CoA + H2O = succinate + CoA + H(+). It catalyses the reaction glutaryl-CoA + H2O = glutarate + CoA + H(+). It carries out the reaction hexanedioyl-CoA + H2O = hexanedioate + CoA + H(+). The catalysed reaction is octanedioyl-CoA + H2O = octanedioate + CoA + H(+). The enzyme catalyses decanedioyl-CoA + H2O = decanedioate + CoA + H(+). It catalyses the reaction dodecanedioyl-CoA + H2O = dodecanedioate + CoA + H(+). It carries out the reaction (9Z)-tetradecenoyl-CoA + H2O = (9Z)-tetradecenoate + CoA + H(+). The catalysed reaction is hexadecanoyl-CoA + H2O = hexadecanoate + CoA + H(+). The enzyme catalyses (9Z)-hexadecenoyl-CoA + H2O = (9Z)-hexadecenoate + CoA + H(+). It catalyses the reaction octadecanoyl-CoA + H2O = octadecanoate + CoA + H(+). It carries out the reaction (9Z)-octadecenoyl-CoA + H2O = (9Z)-octadecenoate + CoA + H(+). The catalysed reaction is (9Z,12Z)-octadecadienoyl-CoA + H2O = (9Z,12Z)-octadecadienoate + CoA + H(+). The enzyme catalyses eicosanoyl-CoA + H2O = eicosanoate + CoA + H(+). It catalyses the reaction (5Z,8Z,11Z,14Z)-eicosatetraenoyl-CoA + H2O = (5Z,8Z,11Z,14Z)-eicosatetraenoate + CoA + H(+). It carries out the reaction (3S)-3-hydroxy-3-methylglutaryl-CoA + H2O = 3-hydroxy-3-methylglutarate + CoA + H(+). The catalysed reaction is 3alpha,7alpha,12alpha-trihydroxy-5beta-cholestan-26-oyl-CoA + H2O = 3alpha,7alpha,12alpha-trihydroxy-5beta-cholestan-26-oate + CoA + H(+). The enzyme catalyses 2-methyloctadecanoyl-CoA + H2O = 2-methyloctadecanoate + CoA + H(+). It catalyses the reaction prostaglandin F2alpha-CoA + H2O = prostaglandin F2alpha + CoA + H(+). Inhibited by CoASH (IC(50)=10-15 uM). Also inhibited by cysteine-reactive agents. In terms of biological role, catalyzes the hydrolysis of acyl-CoAs into free fatty acids and coenzyme A (CoASH), regulating their respective intracellular levels. Displays no strong substrate specificity with respect to the carboxylic acid moiety of Acyl-CoAs. Hydrolyzes medium length (C2 to C20) straight-chain, saturated and unsaturated acyl-CoAS but is inactive towards substrates with longer aliphatic chains. Moreover, it catalyzes the hydrolysis of CoA esters of bile acids, such as choloyl-CoA and chenodeoxycholoyl-CoA and competes with bile acid CoA:amino acid N-acyltransferase (BAAT). Is also able to hydrolyze CoA esters of dicarboxylic acids. It is involved in the metabolic regulation of peroxisome proliferation. The protein is Acyl-coenzyme A thioesterase 8 (Acot8) of Rattus norvegicus (Rat).